The sequence spans 1080 residues: Kinesin-like protein KIN-14E (1080 aa).

The segment at 1–35 (MDFSWTTGWEKAAADDDEAESAPAPAPPAPSPQEA) is disordered. Residues 247–355 (QTRTSKLISK…KQEQTLLSLE (109 aa)) are a coiled coil. The 323-residue stretch at 407 to 729 (NIRVFCRCRP…LNFASRVRRI (323 aa)) folds into the Kinesin motor domain. 490–497 (GQTGTGKT) lines the ATP pocket. Residues 736–893 (KQVDTAELQK…EHHRSVAESK (158 aa)) are a coiled coil. A compositionally biased stretch (basic and acidic residues) spans 960-970 (AMSEKEQHILR). Residues 960–1080 (AMSEKEQHIL…AVNKTRGWVR (121 aa)) form a disordered region. Positions 971-985 (SSDSMNKKVTNNSSI) are enriched in polar residues. A compositionally biased stretch (low complexity) spans 1047–1059 (TATSKTAAATHKT).

The protein belongs to the TRAFAC class myosin-kinesin ATPase superfamily. Kinesin family. KIN-14 subfamily.

The sequence is that of Kinesin-like protein KIN-14E from Oryza sativa subsp. japonica (Rice).